The following is a 162-amino-acid chain: Beta-carotene hydroxylase (162 aa).

Residues 8–135 (VATVLVMELT…GRDHCVSFGF (128 aa)) form the Fatty acid hydroxylase domain.

It belongs to the sterol desaturase family.

The catalysed reaction is all-trans-beta-carotene + 4 reduced [2Fe-2S]-[ferredoxin] + 2 O2 + 4 H(+) = all-trans-zeaxanthin + 4 oxidized [2Fe-2S]-[ferredoxin] + 2 H2O. It participates in carotenoid biosynthesis; astaxanthin biosynthesis. Its function is as follows. Catalyzes the hydroxylation reaction from beta-carotene to zeaxanthin via beta-cryptoxanthin. The sequence is that of Beta-carotene hydroxylase (crtZ) from Paracoccus sp. (strain N81106 / MBIC 01143) (Agrobacterium aurantiacum).